The following is a 260-amino-acid chain: GTP cyclohydrolase FolE2 (260 aa).

It belongs to the GTP cyclohydrolase IV family.

The enzyme catalyses GTP + H2O = 7,8-dihydroneopterin 3'-triphosphate + formate + H(+). It functions in the pathway cofactor biosynthesis; 7,8-dihydroneopterin triphosphate biosynthesis; 7,8-dihydroneopterin triphosphate from GTP: step 1/1. In terms of biological role, converts GTP to 7,8-dihydroneopterin triphosphate. The sequence is that of GTP cyclohydrolase FolE2 from Desulfosudis oleivorans (strain DSM 6200 / JCM 39069 / Hxd3) (Desulfococcus oleovorans).